The chain runs to 129 residues: V-type proton ATPase subunit F 2 (129 aa).

Belongs to the V-ATPase F subunit family. In terms of assembly, V-ATPase is a heteromultimeric enzyme made up of two complexes: the ATP-hydrolytic V1 complex and the proton translocation V0 complex. The V1 complex consists of three catalytic AB heterodimers that form a heterohexamer, three peripheral stalks each consisting of EG heterodimers, one central rotor including subunits D and F, and the regulatory subunits C and H. The proton translocation complex V0 consists of the proton transport subunit a, a ring of proteolipid subunits c9c'', rotary subunit d, subunits e and f, and the accessory subunits VhaAC45 and ATP6AP2.

Its function is as follows. Subunit of the V1 complex of vacuolar(H+)-ATPase (V-ATPase), a multisubunit enzyme composed of a peripheral complex (V1) that hydrolyzes ATP and a membrane integral complex (V0) that translocates protons. V-ATPase is responsible for acidifying and maintaining the pH of intracellular compartments and in some cell types, is targeted to the plasma membrane, where it is responsible for acidifying the extracellular environment. The chain is V-type proton ATPase subunit F 2 (Vha14-2) from Drosophila melanogaster (Fruit fly).